Here is a 903-residue protein sequence, read N- to C-terminus: FIGNL1-interacting regulator of recombination and mitosis (903 aa).

A phosphoserine mark is found at S101 and S795. An N6-acetyllysine modification is found at K843.

Interacts (via its N-terminal region) with PLK1; controls PLK1 kinase activity. Interacts (via the KVVXF motif) with PPP1CC; controls PLK1 kinase activity. Interacts with FIGNL1; may regulate homologous recombination. Post-translationally, phosphorylation at Ser-101 by PLK1 strengthens FIRRM-PLK1 interaction. Phosphorylation at Ser-795 by PLK1 negatively regulates its interaction with PPP1CC.

The protein resides in the chromosome. The protein localises to the centromere. It localises to the kinetochore. Its subcellular location is the nucleus. It is found in the midbody. The protein resides in the cytoplasm. The protein localises to the cytoskeleton. It localises to the spindle. In terms of biological role, regulates PLK1 kinase activity at kinetochores and promotes faithful chromosome segregation in prometaphase by bridging kinase and phosphatase activities. Phosphorylation of FIRRM by PLK1 negatively regulates its interaction with the phosphatase, PPP1CC, thus creating a negative feedback loop for maintaining proper PLK1 kinase activity during mitosis. In complex with FIGL1 may regulate homologous recombination. This Mus musculus (Mouse) protein is FIGNL1-interacting regulator of recombination and mitosis.